A 183-amino-acid polypeptide reads, in one-letter code: Cyanate hydratase (183 aa).

Active-site residues include Arg118, Glu121, and Ser144.

The protein belongs to the cyanase family.

It carries out the reaction cyanate + hydrogencarbonate + 3 H(+) = NH4(+) + 2 CO2. Its function is as follows. Catalyzes the reaction of cyanate with bicarbonate to produce ammonia and carbon dioxide. In Cryptococcus neoformans var. neoformans serotype D (strain B-3501A) (Filobasidiella neoformans), this protein is Cyanate hydratase.